The chain runs to 97 residues: U-scoloptoxin(10)-Sa2a (97 aa).

Positions 1 to 23 (MNKSMLIFFTILFLTYIIEEKEA) are cleaved as a signal peptide.

The protein belongs to the scoloptoxin-10 family. In terms of processing, contains 3 disulfide bonds. Expressed by the venom gland.

The protein localises to the secreted. This is U-scoloptoxin(10)-Sa2a from Scolopendra alternans (Florida Keys giant centipede).